Consider the following 71-residue polypeptide: MKHKRMMLPHYVRVYVCVRTDGENEKAGQSEEYDDDDKEENKKRRRNNGRRGPPEKKKSRRGGEEQTQRII.

Positions 23-71 are disordered; the sequence is ENEKAGQSEEYDDDDKEENKKRRRNNGRRGPPEKKKSRRGGEEQTQRII. Residues 52-71 are compositionally biased toward basic and acidic residues; sequence GPPEKKKSRRGGEEQTQRII.

This is an uncharacterized protein from Caenorhabditis elegans.